The sequence spans 30 residues: Glutathione S-transferase (30 aa).

It belongs to the GST superfamily. In terms of assembly, monomer and homodimer.

Its subcellular location is the cytoplasm. The catalysed reaction is RX + glutathione = an S-substituted glutathione + a halide anion + H(+). Conjugation of reduced glutathione to a wide number of exogenous and endogenous hydrophobic electrophiles. This chain is Glutathione S-transferase, found in Pseudomonas fluorescens.